A 189-amino-acid polypeptide reads, in one-letter code: dTTP/UTP pyrophosphatase (189 aa).

D71 acts as the Proton acceptor in catalysis.

The protein belongs to the Maf family. YhdE subfamily. Requires a divalent metal cation as cofactor.

It is found in the cytoplasm. The enzyme catalyses dTTP + H2O = dTMP + diphosphate + H(+). It catalyses the reaction UTP + H2O = UMP + diphosphate + H(+). Its function is as follows. Nucleoside triphosphate pyrophosphatase that hydrolyzes dTTP and UTP. May have a dual role in cell division arrest and in preventing the incorporation of modified nucleotides into cellular nucleic acids. The sequence is that of dTTP/UTP pyrophosphatase from Pseudoalteromonas translucida (strain TAC 125).